A 2477-amino-acid chain; its full sequence is Non-reducing polyketide synthase mapC (2477 aa).

The segment at 14-269 is N-terminal acylcarrier protein transacylase domain (SAT); sequence LLFGPQCSEI…HQQTHREGIQ (256 aa). The Ketosynthase family 3 (KS3) domain maps to 403 to 820; it reads MPPIAITGMA…GSNAALIVRD (418 aa). Active-site for beta-ketoacyl synthase activity residues include cysteine 568, histidine 703, and histidine 742. The malonyl-CoA:ACP transacylase (MAT) domain stretch occupies residues 930–1233; it reads LCFGGQNGVT…HRVNLDGSDG (304 aa). Residue serine 1017 is the For acyl/malonyl transferase activity of the active site. The tract at residues 1302–1435 is N-terminal hotdog fold; that stretch reads QERAGLLRKL…GSVSLCNERS (134 aa). The 311-residue stretch at 1302 to 1612 folds into the PKS/mFAS DH domain; that stretch reads QERAGLLRKL…FMSVSIRSLT (311 aa). The interval 1307 to 1611 is product template (PT) domain; the sequence is LLRKLSDGPE…RFMSVSIRSL (305 aa). Residue histidine 1336 is the Proton acceptor; for dehydratase activity of the active site. Residues 1461–1612 form a C-terminal hotdog fold region; it reads ASNGLKGSTV…FMSVSIRSLT (152 aa). Aspartate 1518 serves as the catalytic Proton donor; for dehydratase activity. Residues 1651–1725 form the Carrier domain; that stretch reads DSDLVAVQEM…GLTEHIFPGH (75 aa). Serine 1685 is subject to O-(pantetheine 4'-phosphoryl)serine. The segment at 1882 to 2117 is methyltransferase (CMeT) domain; that stretch reads PYALEHDLLQ…GFEWVGWTNN (236 aa). Active-site for thioesterase activity residues include serine 2267 and aspartate 2421.

Its subcellular location is the cytoplasm. The protein localises to the cytosol. The catalysed reaction is 3 malonyl-CoA + acetyl-CoA + S-adenosyl-L-methionine + H(+) = 5-methylorsellinate + S-adenosyl-L-homocysteine + 3 CO2 + 4 CoA. It participates in secondary metabolite biosynthesis; terpenoid biosynthesis. In terms of biological role, non-reducing polyketide synthase; part of the gene cluster that mediates the biosynthesis of mycophenolic acid (MPA), the first isolated antibiotic natural product in the world obtained from a culture of Penicillium brevicompactum in 1893. MpaC catalyzes the synthesis of 5-methylorsellinic acid (5MOA) via the condensation of 1 acetyl-CoA starter unit with 3 malonyl-CoA units and one methylation step. The first step of the pathway is the synthesis of 5-methylorsellinic acid (5MOA) by the cytosolic polyketide synthase mpaC. 5MOA is then converted to the phthalide compound 5,7-dihydroxy-4,6-dimethylphthalide (DHMP) by the endoplasmic reticulum-bound cytochrome P450 monooxygenase mpaDE. MpaDE first catalyzes hydroxylation of 5-MOA to 4,6-dihydroxy-2-(hydroxymethyl)-3-methylbenzoic acid (DHMB). MpaDE then acts as a lactone synthase that catalyzes the ring closure to convert DHMB into DHMP. The next step is the prenylation of DHMP by the Golgi apparatus-associated prenyltransferase mpaA to yield farnesyl-DHMP (FDHMP). The ER-bound oxygenase mpaB then mediates the oxidative cleavage the C19-C20 double bond in FDHMP to yield FDHMP-3C via a mycophenolic aldehyde intermediate. The O-methyltransferase mpaG catalyzes the methylation of FDHMP-3C to yield MFDHMP-3C. After the cytosolic methylation of FDHMP-3C, MFDHMP-3C enters into peroxisomes probably via free diffusion due to its low molecular weight. Upon a peroxisomal CoA ligation reaction, catalyzed by a beta-oxidation component enzyme acyl-CoA ligase ACL891, MFDHMP-3C-CoA would then be restricted to peroxisomes for the following beta-oxidation pathway steps. The peroxisomal beta-oxidation machinery than converts MFDHMP-3C-CoA into MPA_CoA, via a beta-oxidation chain-shortening process. Finally mpaH acts as a peroxisomal acyl-CoA hydrolase with high substrate specificity toward MPA-CoA to release the final product MPA. This is Non-reducing polyketide synthase mapC from Penicillium roqueforti (strain FM164).